The chain runs to 243 residues: Retrotransposon Gag-like protein 6 (243 aa).

A compositionally biased stretch (polar residues) spans 1-12 (MVQPRTSKTESP). The tract at residues 1–22 (MVQPRTSKTESPASAPGASAQM) is disordered. Residues 29-69 (LTSLRLTNSALRREASTLRAEKANLTNMLESVMAELTLLRT) are a coiled coil. Disordered regions lie at residues 84 to 105 (SAIT…PEPF) and 218 to 243 (TGSC…GRNL). Positions 85–94 (AITSNGTRPM) are enriched in polar residues.

The protein belongs to the LDOC1 family. As to expression, widely expressed.

The polypeptide is Retrotransposon Gag-like protein 6 (Mus musculus (Mouse)).